Consider the following 355-residue polypeptide: MTLPLDLLDMPFARLGDRLGNPLRLLMVHAHPDDETTTTGATAALYAAETIDVYLVTCTRGERGEILDPEAQRVVDDAADGEQALGELRVRELAGAVTMLGIKGSRFLGGAGRWWDSGMAGEESNTDPRSLVAGDFQEQVDALAAAIREIRPQVLVTYDSRGGYGHPDHIRAHQLSLAAVDRAAETGGESESGGEGGGEGAEAWSVAKVYAAVVPFSILRSVARRLGSNGDSPFAPLAEALANGVPEDLIEIPYGVPDHLVTAQIDARDWLDAKTAAMRSHRSQMAADSWFFKLAASSDGGFGIEHFQLLRGTAGPLDDGFEADLFAGVRAVDDSDCEPDFGWLPEEEPAGGELF.

3 residues coordinate Zn(2+): histidine 31, aspartate 34, and histidine 169.

The protein belongs to the MshB deacetylase family. The cofactor is Zn(2+).

The enzyme catalyses 1D-myo-inositol 2-acetamido-2-deoxy-alpha-D-glucopyranoside + H2O = 1D-myo-inositol 2-amino-2-deoxy-alpha-D-glucopyranoside + acetate. In terms of biological role, catalyzes the deacetylation of 1D-myo-inositol 2-acetamido-2-deoxy-alpha-D-glucopyranoside (GlcNAc-Ins) in the mycothiol biosynthesis pathway. The protein is 1D-myo-inositol 2-acetamido-2-deoxy-alpha-D-glucopyranoside deacetylase 3 of Catenulispora acidiphila (strain DSM 44928 / JCM 14897 / NBRC 102108 / NRRL B-24433 / ID139908).